The chain runs to 186 residues: uncharacterized protein (186 aa).

An N-acetyltransferase domain is found at 12–184 (LLKSPVEEDD…HIYKLSKQIR (173 aa)).

This sequence belongs to the acetyltransferase family.

The protein resides in the cytoplasm. The protein localises to the nucleus. This is an uncharacterized protein from Schizosaccharomyces pombe (strain 972 / ATCC 24843) (Fission yeast).